Consider the following 245-residue polypeptide: Glutathione S-transferase T1 (245 aa).

The GST N-terminal domain maps to 2 to 83; sequence MKLKVYADRM…YLSSAFPSVA (82 aa). Residues 12-13, 41-42, 54-55, and 67-68 each bind glutathione; these read SQ, QL, KV, and ES. The GST C-terminal domain occupies 90-233; sequence DLSKRAKIHS…KEGFQKRREM (144 aa). The short motif at 243–245 is the Microbody targeting signal element; that stretch reads SKI.

Belongs to the GST superfamily. Theta family.

The protein localises to the nucleus. Its subcellular location is the peroxisome. The catalysed reaction is RX + glutathione = an S-substituted glutathione + a halide anion + H(+). Functionally, in vitro, possesses glutathione S-transferase activity toward 1-chloro-2,4-dinitrobenzene (CDNB) and p-nitrobenzyl chloride (pNBC), and glutathione peroxidase activity toward cumene hydroperoxide and linoleic acid-13-hydroperoxide. May be involved in the conjugation of reduced glutathione to a wide number of exogenous and endogenous hydrophobic electrophiles and have a detoxification role against certain herbicides. This chain is Glutathione S-transferase T1 (GSTT1), found in Arabidopsis thaliana (Mouse-ear cress).